Consider the following 198-residue polypeptide: Recombination protein RecR (198 aa).

A C4-type zinc finger spans residues 57 to 72 (CSICGNLTDDDPCHIC). Residues 80 to 175 (TTILVVEDAK…KVTRLARGLA (96 aa)) enclose the Toprim domain.

This sequence belongs to the RecR family.

May play a role in DNA repair. It seems to be involved in an RecBC-independent recombinational process of DNA repair. It may act with RecF and RecO. This chain is Recombination protein RecR, found in Streptococcus pyogenes serotype M1.